A 264-amino-acid chain; its full sequence is tRNA pseudouridine synthase A (264 aa).

Catalysis depends on D51, which acts as the Nucleophile. Substrate is bound at residue Y109.

Belongs to the tRNA pseudouridine synthase TruA family. As to quaternary structure, homodimer.

The catalysed reaction is uridine(38/39/40) in tRNA = pseudouridine(38/39/40) in tRNA. Formation of pseudouridine at positions 38, 39 and 40 in the anticodon stem and loop of transfer RNAs. The chain is tRNA pseudouridine synthase A from Vibrio parahaemolyticus serotype O3:K6 (strain RIMD 2210633).